The sequence spans 227 residues: UPF0173 metal-dependent hydrolase BCG9842_B0515 (227 aa).

This sequence belongs to the UPF0173 family.

This is UPF0173 metal-dependent hydrolase BCG9842_B0515 from Bacillus cereus (strain G9842).